A 182-amino-acid polypeptide reads, in one-letter code: Isopentenyl-diphosphate Delta-isomerase (182 aa).

The Mn(2+) site is built by His-25 and His-32. In terms of domain architecture, Nudix hydrolase spans 30 to 164; the sequence is LLHLAFSSWL…PWAFSPWMVM (135 aa). Residue Cys-67 is part of the active site. His-69 lines the Mn(2+) pocket. Glu-87 contacts Mg(2+). Mn(2+) contacts are provided by Glu-114 and Glu-116. The active site involves Glu-116.

It belongs to the IPP isomerase type 1 family. In terms of assembly, homodimer. Mg(2+) serves as cofactor. Requires Mn(2+) as cofactor.

The protein resides in the cytoplasm. It carries out the reaction isopentenyl diphosphate = dimethylallyl diphosphate. The protein operates within isoprenoid biosynthesis; dimethylallyl diphosphate biosynthesis; dimethylallyl diphosphate from isopentenyl diphosphate: step 1/1. Its function is as follows. Catalyzes the 1,3-allylic rearrangement of the homoallylic substrate isopentenyl (IPP) to its highly electrophilic allylic isomer, dimethylallyl diphosphate (DMAPP). This is Isopentenyl-diphosphate Delta-isomerase from Escherichia coli O127:H6 (strain E2348/69 / EPEC).